A 1562-amino-acid chain; its full sequence is Phospholipid-transporting ATPase dnf1 (1562 aa).

Disordered stretches follow at residues 1–38 (MKSSGIAGDSNGFETNFLNETTNREEDGAFNWNAADDG), 55–94 (LPLGIDENELDEIDINGDSKKLDSVEVDESHDVNSPSDSR), 115–134 (TPSTKTEQTSKGKGKKKKAH), and 146–166 (PLDDIEPTSPREASPVFNGRP). At 1 to 275 (MKSSGIAGDS…IAIMQMIPGW (275 aa)) the chain is on the extracellular side. Residues 12–21 (GFETNFLNET) show a composition bias toward polar residues. The span at 60 to 69 (DENELDEIDI) shows a compositional bias: acidic residues. Basic and acidic residues predominate over residues 71-86 (GDSKKLDSVEVDESHD). Residues 276-296 (STTGTYTTIIPLLIFISIAIL) form a helical membrane-spanning segment. Residues 297 to 574 (REGFDNYRRY…APSMQKVTNR (278 aa)) are Cytoplasmic-facing. The segment at 347–406 (SQESASRSTIRSTDEREPERTSEDPPQLPPSPSSPSSPALSVKPNIDPQPPLYNSTLTTT) is disordered. The span at 358 to 369 (STDEREPERTSE) shows a compositional bias: basic and acidic residues. Over residues 372 to 381 (PQLPPSPSSP) the composition is skewed to pro residues. A helical membrane pass occupies residues 575 to 595 (IVIFIFALVVSMAIYCTAAYF). Residues 596-614 (VWQKKVERKLWYLTNSKLS) lie on the Extracellular side of the membrane. A helical membrane pass occupies residues 615–635 (FVPILVSFIILYNTMVPISLY). Residues 636-1309 (VSMEIIRVFQ…YILGTFYKEQ (674 aa)) are Cytoplasmic-facing. D684 (4-aspartylphosphate intermediate) is an active-site residue. ATP-binding residues include D684, K685, T686, E794, F843, S845, K848, and K866. Position 684 (D684) interacts with Mg(2+). T686 is a binding site for Mg(2+). The residue at position 954 (S954) is a Phosphoserine. Residues R1022, T1023, T1102, G1103, D1104, 1181-1188 (VIVIDGST), R1216, and K1222 contribute to the ATP site. Position 1243 (D1243) interacts with Mg(2+). Positions 1246 and 1247 each coordinate ATP. Residues 1310-1330 (FFFLMQAIMQPFVGYTGQSLY) traverse the membrane as a helical segment. Residues 1331–1332 (ES) lie on the Extracellular side of the membrane. A helical transmembrane segment spans residues 1333–1353 (WGLTCFNTLFSSLCVIGLGIF). At 1354 to 1381 (EKDLSASTVIAVPELYQKGINNEAFNWR) the chain is on the cytoplasmic side. Residues 1382–1402 (VYFGWCSIAFIQAFLVFYVTY) form a helical membrane-spanning segment. At 1403 to 1414 (SLFGMKELNDNN) the chain is on the extracellular side. The chain crosses the membrane as a helical span at residues 1415–1435 (IFAYGQLIFTAAIFIMNFKLV). The Cytoplasmic segment spans residues 1436-1443 (FIEMQYIN). Residues 1444 to 1464 (IISIIVLVLTSLAWFLFNIFI) form a helical membrane-spanning segment. Residues 1465–1490 (SEHYPDKNLYLARSQFLHHFGKNPSW) lie on the Extracellular side of the membrane. A helical transmembrane segment spans residues 1491–1511 (WLTMLFVMVCALTIDIVAQML). At 1512 to 1562 (RRTLRPTDTDIFVEMENDAFVRSRFEQESGEFLQANAPSVDEIEQYLKSRD) the chain is on the cytoplasmic side.

Belongs to the cation transport ATPase (P-type) (TC 3.A.3) family. Type IV subfamily. Requires Mg(2+) as cofactor.

It localises to the golgi apparatus. Its subcellular location is the trans-Golgi network membrane. It is found in the endosome membrane. The catalysed reaction is ATP + H2O + phospholipidSide 1 = ADP + phosphate + phospholipidSide 2.. It catalyses the reaction a 1,2-diacyl-sn-glycero-3-phosphocholine(out) + ATP + H2O = a 1,2-diacyl-sn-glycero-3-phosphocholine(in) + ADP + phosphate + H(+). It carries out the reaction a 1,2-diacyl-sn-glycero-3-phosphoethanolamine(out) + ATP + H2O = a 1,2-diacyl-sn-glycero-3-phosphoethanolamine(in) + ADP + phosphate + H(+). In terms of biological role, catalytic component of a P4-ATPase flippase complex which catalyzes the hydrolysis of ATP coupled to the transport of phosphatidylcholine and small amounts of phosphatidylethanolamine from the lumen to the cytosolic leaflet of the trans-Golgi network and ensures the maintenance of asymmetric distribution of phospholipids. May be involved in transport from early endosomes to the trans-Golgi network (TGN). This is Phospholipid-transporting ATPase dnf1 from Schizosaccharomyces pombe (strain 972 / ATCC 24843) (Fission yeast).